Reading from the N-terminus, the 118-residue chain is Basic phospholipase A2 2 (118 aa).

Disulfide bonds link Cys11-Cys71, Cys27-Cys117, Cys29-Cys45, Cys44-Cys98, Cys51-Cys91, Cys60-Cys84, and Cys78-Cys89. Ca(2+) is bound by residues Tyr28, Gly30, and Gly32. The active site involves His48. Asp49 contributes to the Ca(2+) binding site. Asp92 is a catalytic residue.

The protein belongs to the phospholipase A2 family. Group I subfamily. D49 sub-subfamily. Ca(2+) is required as a cofactor. Expressed by the venom gland.

It is found in the secreted. The catalysed reaction is a 1,2-diacyl-sn-glycero-3-phosphocholine + H2O = a 1-acyl-sn-glycero-3-phosphocholine + a fatty acid + H(+). Snake venom phospholipase A2 (PLA2) that inhibits neuromuscular transmission by blocking acetylcholine release from the nerve termini. PLA2 catalyzes the calcium-dependent hydrolysis of the 2-acyl groups in 3-sn-phosphoglycerides. In Laticauda colubrina (Yellow-lipped sea krait), this protein is Basic phospholipase A2 2.